The chain runs to 275 residues: Gamma carbonic anhydrase 1, mitochondrial (275 aa).

A mitochondrion-targeting transit peptide spans 1–43 (MGTLGRAFYSVGFWIRETGQALDRLGCRLQGKNYFREQLSRHR). Residues 86-88 (RGD) and 101-102 (QD) contribute to the substrate site. Zn(2+) contacts are provided by His-107, His-130, and His-135. Asn-209 serves as a coordination point for substrate. Residues 256 to 275 (LNLPNNILPDKETKRPSNVN) form a disordered region. Positions 264–275 (PDKETKRPSNVN) are enriched in basic and acidic residues.

The protein belongs to the gamma-class carbonic anhydrase family. As to quaternary structure, homotrimer. Component of the mitochondrial oxidoreductase respiratory chain complex I; element of the extra matrix-exposed domain, which is attached to the membrane arm of this complex. Requires Zn(2+) as cofactor.

It localises to the mitochondrion membrane. In terms of biological role, enzyme involved in the catabolism of H(2)CO(3) but that does not mediates the reversible hydration of carbon dioxide. Mediates complex I assembly in mitochondria and respiration. This is Gamma carbonic anhydrase 1, mitochondrial (GAMMACA1) from Arabidopsis thaliana (Mouse-ear cress).